Here is a 367-residue protein sequence, read N- to C-terminus: Peroxisome biogenesis protein 16 (367 aa).

The interval 135–173 (GGETPNEEKDSNQSESQNRAGNSGRNLGPHGLGNQNHHN) is disordered. The span at 147–159 (QSESQNRAGNSGR) shows a compositional bias: polar residues. 2 helical membrane passes run 237-257 (ALFA…VLFI) and 264-284 (SWIP…LLAN).

This sequence belongs to the peroxin-16 family. In terms of assembly, interacts with APEM9 (via both N- and C-terminus). In terms of processing, the detection of an additional immunorelated polypeptide of 52 kDa suggests a post-translational modification of PEX16. In terms of tissue distribution, expressed in roots, siliques, seeds, cotyledons, leaves and flowers. Low expression in leaves and roots.

The protein resides in the peroxisome membrane. Its subcellular location is the endoplasmic reticulum membrane. Functionally, involved in the formation of peroxisomes, lipid bodies and protein bodies. This Arabidopsis thaliana (Mouse-ear cress) protein is Peroxisome biogenesis protein 16.